The primary structure comprises 422 residues: GPI mannosyltransferase 1 (422 aa).

8 helical membrane passes run 10–30 (TTPLFTISLLLRLGLLFYGIY), 82–102 (FPAFGKLVFAAADLLAGWLIL), 162–182 (IILGLSVHFKIYPFIYAPAIV), 216–236 (LKFGLLSLITFMILNLVMFAI), 282–302 (IESFAFLPQLLLSCVLIPLAL), 327–347 (SQYFLWYMIFLPLYLPNSSFL), 352–372 (LGIFALLLWIVSQAAWLQQGY), and 385–405 (GLWLASIAFFLVNCWILGVII).

This sequence belongs to the PIGM family.

It is found in the endoplasmic reticulum membrane. It functions in the pathway glycolipid biosynthesis; glycosylphosphatidylinositol-anchor biosynthesis. In terms of biological role, mannosyltransferase involved in glycosylphosphatidylinositol-anchor biosynthesis. Transfers the first alpha-1,4-mannose to GlcN-acyl-PI during GPI precursor assembly. Required for cell wall integrity. The polypeptide is GPI mannosyltransferase 1 (GPI14) (Gibberella zeae (strain ATCC MYA-4620 / CBS 123657 / FGSC 9075 / NRRL 31084 / PH-1) (Wheat head blight fungus)).